Consider the following 311-residue polypeptide: MRVLLSLVVILFIINSAFAVKINIGRPTKSHKTIHHETWVEEQTDQFDNIKVGQLLGFKRSPNRPKLQIKSYDPLGVQIPTSFNAQTNWPNCTTISQIQNQARCGSCWAFGATESATDRLCIHNNENVQLSFMDMVTCDETDNGCEGGDAFSAWNWLRKQGAVSEECLPYTIPTCPPAQQPCLNFVNTPSCTKECQSNSSLIYSQDKHKMAKIYSFDSDEAIMQEIVTNGPVEACFTVFEDFLAYKSGVYVHTTGKDLGGHCVKLVGFGTLNGVDYYAANNQWTTSWGDNGTFLIKRGDCGISDDVVAGLP.

A signal peptide spans 1-19; that stretch reads MRVLLSLVVILFIINSAFA. The propeptide occupies 20–78; that stretch reads VKINIGRPTKSHKTIHHETWVEEQTDQFDNIKVGQLLGFKRSPNRPKLQIKSYDPLGVQ. Asn91 is a glycosylation site (N-linked (GlcNAc...) asparagine). 5 cysteine pairs are disulfide-bonded: Cys92-Cys121, Cys104-Cys145, Cys138-Cys191, Cys167-Cys195, and Cys175-Cys182. Cys107 is an active-site residue. Asn198 carries N-linked (GlcNAc...) asparagine glycosylation. Active-site residues include His261 and Asn281. Asn290 carries N-linked (GlcNAc...) asparagine glycosylation.

It belongs to the peptidase C1 family.

Its subcellular location is the lysosome. It catalyses the reaction Hydrolysis of proteins with broad specificity for peptide bonds. Preferentially cleaves -Arg-Arg-|-Xaa bonds in small molecule substrates (thus differing from cathepsin L). In addition to being an endopeptidase, shows peptidyl-dipeptidase activity, liberating C-terminal dipeptides.. Thiol protease which is believed to participate in intracellular degradation and turnover of proteins. This Dictyostelium discoideum (Social amoeba) protein is Cathepsin B (ctsB).